A 107-amino-acid chain; its full sequence is Ferredoxin (107 aa).

4Fe-4S ferredoxin-type domains follow at residues 2–30 (TYVV…YEGE) and 31–60 (FMLV…PETP). Residues Cys-9 and Cys-17 each coordinate [3Fe-4S] cluster. 4 residues coordinate [4Fe-4S] cluster: Cys-21, Cys-40, Cys-43, and Cys-46. Cys-50 lines the [3Fe-4S] cluster pocket.

[4Fe-4S] cluster is required as a cofactor. It depends on [3Fe-4S] cluster as a cofactor.

Its function is as follows. Ferredoxins are iron-sulfur proteins that transfer electrons in a wide variety of metabolic reactions. The sequence is that of Ferredoxin (fdxA) from Rickettsia bellii (strain RML369-C).